The sequence spans 192 residues: Peptidyl-tRNA hydrolase (192 aa).

Y17 is a binding site for tRNA. The Proton acceptor role is filled by H22. Y68, N70, and N116 together coordinate tRNA.

This sequence belongs to the PTH family. As to quaternary structure, monomer.

The protein resides in the cytoplasm. The catalysed reaction is an N-acyl-L-alpha-aminoacyl-tRNA + H2O = an N-acyl-L-amino acid + a tRNA + H(+). Hydrolyzes ribosome-free peptidyl-tRNAs (with 1 or more amino acids incorporated), which drop off the ribosome during protein synthesis, or as a result of ribosome stalling. Functionally, catalyzes the release of premature peptidyl moieties from peptidyl-tRNA molecules trapped in stalled 50S ribosomal subunits, and thus maintains levels of free tRNAs and 50S ribosomes. The chain is Peptidyl-tRNA hydrolase from Mycolicibacterium gilvum (strain PYR-GCK) (Mycobacterium gilvum (strain PYR-GCK)).